A 247-amino-acid chain; its full sequence is UPF0280 protein Mevan_0550 (247 aa).

Belongs to the UPF0280 family.

In Methanococcus vannielii (strain ATCC 35089 / DSM 1224 / JCM 13029 / OCM 148 / SB), this protein is UPF0280 protein Mevan_0550.